A 514-amino-acid polypeptide reads, in one-letter code: 2,3-bisphosphoglycerate-independent phosphoglycerate mutase (514 aa).

Mn(2+) contacts are provided by D13 and S63. S63 serves as the catalytic Phosphoserine intermediate. Substrate contacts are provided by residues H124, 154 to 155 (RD), R186, R192, 258 to 261 (RADR), and K332. D399, H403, D440, H441, and H459 together coordinate Mn(2+).

It belongs to the BPG-independent phosphoglycerate mutase family. In terms of assembly, monomer. It depends on Mn(2+) as a cofactor.

It carries out the reaction (2R)-2-phosphoglycerate = (2R)-3-phosphoglycerate. The protein operates within carbohydrate degradation; glycolysis; pyruvate from D-glyceraldehyde 3-phosphate: step 3/5. Catalyzes the interconversion of 2-phosphoglycerate and 3-phosphoglycerate. This is 2,3-bisphosphoglycerate-independent phosphoglycerate mutase from Legionella pneumophila (strain Corby).